Here is a 177-residue protein sequence, read N- to C-terminus: Large ribosomal subunit protein uL10 (177 aa).

Belongs to the universal ribosomal protein uL10 family. In terms of assembly, part of the ribosomal stalk of the 50S ribosomal subunit. The N-terminus interacts with L11 and the large rRNA to form the base of the stalk. The C-terminus forms an elongated spine to which L12 dimers bind in a sequential fashion forming a multimeric L10(L12)X complex.

Functionally, forms part of the ribosomal stalk, playing a central role in the interaction of the ribosome with GTP-bound translation factors. This chain is Large ribosomal subunit protein uL10, found in Leptospira borgpetersenii serovar Hardjo-bovis (strain JB197).